We begin with the raw amino-acid sequence, 65 residues long: Large ribosomal subunit protein bL35 (65 aa).

The segment at 1-47 is disordered; it reads MPKIKTNRGAAKRFRKTASGKIKRNSAFTSHILTSKTRKRKRQLRSS. Positions 10–24 are enriched in basic residues; that stretch reads AAKRFRKTASGKIKR. Polar residues predominate over residues 26–35; sequence SAFTSHILTS.

This sequence belongs to the bacterial ribosomal protein bL35 family.

This Geobacter metallireducens (strain ATCC 53774 / DSM 7210 / GS-15) protein is Large ribosomal subunit protein bL35.